We begin with the raw amino-acid sequence, 357 residues long: MRKKIILTGGGTAGHVMVNVALIPKLKELGWDIVYIGSHQGIEREIIGRIDGVPYYSVSTGKLRRYFDWKNFKDPFNVLKGVWQAYRLIQKEKPDVVFSKGGFVSVPVILGAWLNGVPSVIHESDLTPGLANKIAMPFATKICLTFPETKQYVNADKAVYVGAVVRDELKDGNAEQGRKMCQFDGKKPVLLAMGGSLGSKKINDALRANLSTLLAEFDIIHICGKGNIDPSLAGQKGYKQFEYVNEELPHLLALADIVVSRAGANAIFELLSLRKPMLLIPLSKAASRGDQIANARSFEKAGYAEVLMEEDLTNESLQAAIHRLYENKDRYQKNMEKAGASDPLQTLLAIIQDTARL.

UDP-N-acetyl-alpha-D-glucosamine is bound by residues 12–14 (TAG), arginine 166, serine 196, and glutamine 291.

This sequence belongs to the glycosyltransferase 28 family. MurG subfamily.

The protein localises to the cell membrane. The enzyme catalyses di-trans,octa-cis-undecaprenyl diphospho-N-acetyl-alpha-D-muramoyl-L-alanyl-D-glutamyl-meso-2,6-diaminopimeloyl-D-alanyl-D-alanine + UDP-N-acetyl-alpha-D-glucosamine = di-trans,octa-cis-undecaprenyl diphospho-[N-acetyl-alpha-D-glucosaminyl-(1-&gt;4)]-N-acetyl-alpha-D-muramoyl-L-alanyl-D-glutamyl-meso-2,6-diaminopimeloyl-D-alanyl-D-alanine + UDP + H(+). The protein operates within cell wall biogenesis; peptidoglycan biosynthesis. In terms of biological role, cell wall formation. Catalyzes the transfer of a GlcNAc subunit on undecaprenyl-pyrophosphoryl-MurNAc-pentapeptide (lipid intermediate I) to form undecaprenyl-pyrophosphoryl-MurNAc-(pentapeptide)GlcNAc (lipid intermediate II). This Geobacillus kaustophilus (strain HTA426) protein is UDP-N-acetylglucosamine--N-acetylmuramyl-(pentapeptide) pyrophosphoryl-undecaprenol N-acetylglucosamine transferase.